Consider the following 861-residue polypeptide: Bifunctional uridylyltransferase/uridylyl-removing enzyme (861 aa).

The segment at 1-321 (MKNDNRIIKN…VYHQKQKIIR (321 aa)) is uridylyltransferase. The uridylyl-removing stretch occupies residues 322 to 678 (LDDEFQLSNR…IMPHHSQGGT (357 aa)). In terms of domain architecture, HD spans 440–562 (VDQHTLFVIR…LPHAKYLDYL (123 aa)). ACT domains follow at residues 679-760 (EVFI…AVSR) and 788-861 (QLFL…KSKY).

Belongs to the GlnD family. Requires Mg(2+) as cofactor.

It catalyses the reaction [protein-PII]-L-tyrosine + UTP = [protein-PII]-uridylyl-L-tyrosine + diphosphate. It carries out the reaction [protein-PII]-uridylyl-L-tyrosine + H2O = [protein-PII]-L-tyrosine + UMP + H(+). Its activity is regulated as follows. Uridylyltransferase (UTase) activity is inhibited by glutamine, while glutamine activates uridylyl-removing (UR) activity. Modifies, by uridylylation and deuridylylation, the PII regulatory proteins (GlnB and homologs), in response to the nitrogen status of the cell that GlnD senses through the glutamine level. Under low glutamine levels, catalyzes the conversion of the PII proteins and UTP to PII-UMP and PPi, while under higher glutamine levels, GlnD hydrolyzes PII-UMP to PII and UMP (deuridylylation). Thus, controls uridylylation state and activity of the PII proteins, and plays an important role in the regulation of nitrogen assimilation and metabolism. The polypeptide is Bifunctional uridylyltransferase/uridylyl-removing enzyme (Legionella pneumophila (strain Lens)).